The chain runs to 215 residues: 3-demethoxyubiquinol 3-hydroxylase (215 aa).

Residues Glu64, Glu94, His97, Glu146, Glu178, and His181 each contribute to the Fe cation site.

Belongs to the COQ7 family. The cofactor is Fe cation.

It localises to the cell membrane. It carries out the reaction a 5-methoxy-2-methyl-3-(all-trans-polyprenyl)benzene-1,4-diol + AH2 + O2 = a 3-demethylubiquinol + A + H2O. The protein operates within cofactor biosynthesis; ubiquinone biosynthesis. Its function is as follows. Catalyzes the hydroxylation of 2-nonaprenyl-3-methyl-6-methoxy-1,4-benzoquinol during ubiquinone biosynthesis. This Pseudomonas aeruginosa (strain LESB58) protein is 3-demethoxyubiquinol 3-hydroxylase.